Reading from the N-terminus, the 1016-residue chain is Vacuolar membrane protease (1016 aa).

The disordered stretch occupies residues 1 to 36 (MAETESGTGNSPSHRLSETSNASGNRSHQQSKQIAS). Topologically, residues 1–57 (MAETESGTGNSPSHRLSETSNASGNRSHQQSKQIASYKSSKPNVFIRFIRAIFGYRK) are cytoplasmic. The helical transmembrane segment at 58–78 (TSVTLFVFITIIATLILVELS) threads the bilayer. Residues 79–408 (NSLDFSVKLP…FVIPASQLVL (330 aa)) are Vacuolar-facing. 2 N-linked (GlcNAc...) asparagine glycosylation sites follow: Asn-147 and Asn-177. Zn(2+) contacts are provided by His-191 and Asp-203. Glu-238 functions as the Proton acceptor in the catalytic mechanism. Positions 239, 264, and 337 each coordinate Zn(2+). The helical transmembrane segment at 409 to 429 (INVTCLAVIPLISLPLLVIIF) threads the bilayer. Residues 430–438 (NYKKNWHIG) are Cytoplasmic-facing. A helical membrane pass occupies residues 439-459 (FINAIKFPVSLVLSICILNII). Residues 460–481 (THNVIASINEFLPNSSYDSIVS) are Vacuolar-facing. N-linked (GlcNAc...) asparagine glycosylation is present at Asn-473. Residues 482 to 502 (TLYSLFLLLNYLFLNGINFIF) traverse the membrane as a helical segment. Over 503 to 511 (KGYKGLYHD) the chain is Cytoplasmic. Residues 512-532 (EKLILIIQTSFIYWVLLIVST) traverse the membrane as a helical segment. The Vacuolar segment spans residues 533–547 (NKLSKNKIGNDHTGE). The chain crosses the membrane as a helical span at residues 548–568 (FPLIMLFLLQSIGALFGLFSW). The Cytoplasmic segment spans residues 569 to 646 (SFKKTTPDEL…SFSYDWSIQY (78 aa)). Residues 598 to 622 (YGSNEAELESGEPISSNSSVSLNSS) form a disordered region. The segment covering 612 to 622 (SSNSSVSLNSS) has biased composition (low complexity). The helical transmembrane segment at 647–667 (VVIVPLSSLIVYNTGSLLLSG) threads the bilayer. Topologically, residues 668 to 681 (LNKSIQESLNAEKL) are vacuolar. Residue Asn-669 is glycosylated (N-linked (GlcNAc...) asparagine). Residues 682-702 (IFDLIQLVAVTLAIPFLPFIF) traverse the membrane as a helical segment. Over 703–706 (KINR) the chain is Cytoplasmic. A helical transmembrane segment spans residues 707–727 (LLVTALVLVFCSGFISIFLKS). Topologically, residues 728–1016 (PFDQLNPLKL…LVSVSKYVEI (289 aa)) are vacuolar. Asn-778, Asn-821, Asn-850, Asn-875, and Asn-977 each carry an N-linked (GlcNAc...) asparagine glycan.

This sequence belongs to the peptidase M28 family. It depends on Zn(2+) as a cofactor.

Its subcellular location is the vacuole membrane. In terms of biological role, may be involved in vacuolar sorting and osmoregulation. The protein is Vacuolar membrane protease of Debaryomyces hansenii (strain ATCC 36239 / CBS 767 / BCRC 21394 / JCM 1990 / NBRC 0083 / IGC 2968) (Yeast).